We begin with the raw amino-acid sequence, 312 residues long: Protease HtpX homolog (312 aa).

Transmembrane regions (helical) follow at residues threonine 6–glycine 26 and glycine 28–alanine 48. Histidine 130 contacts Zn(2+). The active site involves glutamate 131. Histidine 134 is a binding site for Zn(2+). A run of 2 helical transmembrane segments spans residues isoleucine 145–glycine 165 and proline 173–valine 193. Glutamate 202 lines the Zn(2+) pocket. Residues proline 287–glycine 297 are compositionally biased toward low complexity. The disordered stretch occupies residues proline 287 to glycine 312. Positions proline 298–glycine 312 are enriched in gly residues.

Belongs to the peptidase M48B family. The cofactor is Zn(2+).

The protein localises to the cell inner membrane. The chain is Protease HtpX homolog from Azorhizobium caulinodans (strain ATCC 43989 / DSM 5975 / JCM 20966 / LMG 6465 / NBRC 14845 / NCIMB 13405 / ORS 571).